We begin with the raw amino-acid sequence, 33 residues long: Brevinin-2Rk (33 aa).

Residues Cys27 and Cys33 are joined by a disulfide bond.

Expressed by the skin glands.

It localises to the secreted. Its function is as follows. Antimicrobial peptide. This is Brevinin-2Rk from Pelophylax ridibundus (Marsh frog).